The chain runs to 283 residues: Bifunctional protein FolD 1 (283 aa).

NADP(+) is bound by residues 166 to 168 (GRS) and Ile232.

This sequence belongs to the tetrahydrofolate dehydrogenase/cyclohydrolase family. Homodimer.

The enzyme catalyses (6R)-5,10-methylene-5,6,7,8-tetrahydrofolate + NADP(+) = (6R)-5,10-methenyltetrahydrofolate + NADPH. It carries out the reaction (6R)-5,10-methenyltetrahydrofolate + H2O = (6R)-10-formyltetrahydrofolate + H(+). The protein operates within one-carbon metabolism; tetrahydrofolate interconversion. Its function is as follows. Catalyzes the oxidation of 5,10-methylenetetrahydrofolate to 5,10-methenyltetrahydrofolate and then the hydrolysis of 5,10-methenyltetrahydrofolate to 10-formyltetrahydrofolate. This Lactobacillus johnsonii (strain CNCM I-12250 / La1 / NCC 533) protein is Bifunctional protein FolD 1.